The primary structure comprises 205 residues: MSQKIDTSELVVDFVGGAVGHRFRSGEGRGQALAKAAGLTRDATPEIVDATAGLGRDAFLLASLGAKVTLIERSEKMHALLAEGLARAAEEGGRYAETVARMTLLLGDSSLLLPDLKPQVVLVDPMHPPRGNSALVKKEMRQIREIVGTDPDAERLMQVALEAAQNRVVLKWPLRADPMVGLRKPSHQILGKSTRYDVFVKAKLS.

Residues 56–57 (RD), 72–73 (ER), and aspartate 124 each bind S-adenosyl-L-methionine.

It belongs to the methyltransferase superfamily. RsmJ family.

The protein localises to the cytoplasm. The catalysed reaction is guanosine(1516) in 16S rRNA + S-adenosyl-L-methionine = N(2)-methylguanosine(1516) in 16S rRNA + S-adenosyl-L-homocysteine + H(+). Its function is as follows. Specifically methylates the guanosine in position 1516 of 16S rRNA. This Brucella anthropi (strain ATCC 49188 / DSM 6882 / CCUG 24695 / JCM 21032 / LMG 3331 / NBRC 15819 / NCTC 12168 / Alc 37) (Ochrobactrum anthropi) protein is Ribosomal RNA small subunit methyltransferase J.